Consider the following 420-residue polypeptide: uncharacterized protein (420 aa).

The region spanning 7–65 (NIERGSVINVEILNAAHGGQGIAKYDGRVIFVKGAFPGDRLSANITHVKKKFARATIAS) is the TRAM domain. S-adenosyl-L-methionine contacts are provided by Gln-245, Tyr-280, Glu-304, and Asp-349. Cys-376 functions as the Nucleophile in the catalytic mechanism.

It belongs to the class I-like SAM-binding methyltransferase superfamily. RNA M5U methyltransferase family.

This is an uncharacterized protein from Corynebacterium diphtheriae (strain ATCC 700971 / NCTC 13129 / Biotype gravis).